We begin with the raw amino-acid sequence, 900 residues long: Translation initiation factor IF-2 (900 aa).

2 disordered regions span residues glycine 30–lysine 77 and asparagine 89–methionine 291. Over residues asparagine 89 to threonine 112 the composition is skewed to low complexity. Positions proline 113–proline 129 are enriched in pro residues. Residues proline 175–alanine 187 show a composition bias toward low complexity. Gly residues predominate over residues glycine 215–glycine 271. The span at arginine 275–lysine 284 shows a compositional bias: basic residues. The region spanning valine 396–leucine 567 is the tr-type G domain. The segment at glycine 405–threonine 412 is G1. Glycine 405–threonine 412 lines the GTP pocket. The G2 stretch occupies residues glycine 430–histidine 434. Residues aspartate 455–glycine 458 form a G3 region. GTP is bound by residues aspartate 455 to histidine 459 and asparagine 509 to aspartate 512. Residues asparagine 509–aspartate 512 form a G4 region. The G5 stretch occupies residues serine 545–lysine 547.

Belongs to the TRAFAC class translation factor GTPase superfamily. Classic translation factor GTPase family. IF-2 subfamily.

It localises to the cytoplasm. Functionally, one of the essential components for the initiation of protein synthesis. Protects formylmethionyl-tRNA from spontaneous hydrolysis and promotes its binding to the 30S ribosomal subunits. Also involved in the hydrolysis of GTP during the formation of the 70S ribosomal complex. The chain is Translation initiation factor IF-2 from Mycobacterium bovis (strain BCG / Pasteur 1173P2).